Reading from the N-terminus, the 219-residue chain is 3-dehydroquinate dehydratase (219 aa).

3-dehydroquinate contacts are provided by residues 34–36 (ELR) and arginine 63. The active-site Proton donor/acceptor is histidine 114. Lysine 139 functions as the Schiff-base intermediate with substrate in the catalytic mechanism. 3 residues coordinate 3-dehydroquinate: arginine 174, threonine 193, and glutamine 197.

The protein belongs to the type-I 3-dehydroquinase family. In terms of assembly, homodimer.

The catalysed reaction is 3-dehydroquinate = 3-dehydroshikimate + H2O. Its pathway is metabolic intermediate biosynthesis; chorismate biosynthesis; chorismate from D-erythrose 4-phosphate and phosphoenolpyruvate: step 3/7. In terms of biological role, involved in the third step of the chorismate pathway, which leads to the biosynthesis of aromatic amino acids. Catalyzes the cis-dehydration of 3-dehydroquinate (DHQ) and introduces the first double bond of the aromatic ring to yield 3-dehydroshikimate. The protein is 3-dehydroquinate dehydratase of Sulfolobus acidocaldarius (strain ATCC 33909 / DSM 639 / JCM 8929 / NBRC 15157 / NCIMB 11770).